Consider the following 550-residue polypeptide: Copine-F (550 aa).

2 C2 domains span residues 1 to 115 and 123 to 246; these read MAET…RLIG and ITGK…PIIN. In terms of domain architecture, VWFA spans 296-521; sequence DLMVAIDCTE…DFQNEILRKL (226 aa).

Belongs to the copine family.

In Dictyostelium discoideum (Social amoeba), this protein is Copine-F (cpnF).